Here is a 2581-residue protein sequence, read N- to C-terminus: Chromodomain-helicase-DNA-binding protein 8 (2581 aa).

Disordered stretches follow at residues 22 to 114 (DDSF…QTST), 253 to 283 (VKGS…TQGE), 349 to 392 (QKIQ…SPGQ), 429 to 582 (ALSS…QVKR), and 596 to 615 (DEEE…PILP). Polar residues-rich tracts occupy residues 42-51 (SLDSLDQMNQ) and 94-114 (DYTT…QTST). Residues 255 to 267 (GSAPAGNPGATGP) show a composition bias toward low complexity. The segment covering 355–370 (PQPPSSQPQPQQPPST) has biased composition (pro residues). At S432 the chain carries Phosphoserine. Composition is skewed to basic and acidic residues over residues 445-462 (GMEE…EKAN) and 493-516 (RPEE…EEKP). Residues S553 and S562 each carry the phosphoserine modification. Positions 572-582 (QKRRSNRQVKR) are enriched in basic residues. K609 participates in a covalent cross-link: Glycyl lysine isopeptide (Lys-Gly) (interchain with G-Cter in SUMO). Chromo domains lie at 642 to 709 (AIVD…AQMR) and 724 to 790 (VEVD…RVNR). Residues 823–997 (LFNWYNRQNC…FSLLHFLEPS (175 aa)) form the Helicase ATP-binding domain. Residue 836–843 (DEMGLGKT) participates in ATP binding. A DEAH box motif is present at residues 948 to 951 (DEAH). One can recognise a Helicase C-terminal domain in the interval 1137–1288 (LIDKLLPKLK…KAVLQSMSGR (152 aa)). 2 positions are modified to phosphoserine: S1420 and S1424. The disordered stretch occupies residues 1692–1712 (EDPEYKPLQGPPKDQDDEGDP). An interaction with FAM124B region spans residues 1789 to 2302 (IARREKQQRW…LVELEVECME (514 aa)). A phosphoserine mark is found at S1976 and S1978. A disordered region spans residues 1991 to 2116 (SRTASPLPLR…TDQSRSKLYD (126 aa)). A Phosphothreonine modification is found at T1993. S1995 and S2008 each carry phosphoserine. The segment covering 2011–2021 (ETATQVPSLES) has biased composition (polar residues). A Glycyl lysine isopeptide (Lys-Gly) (interchain with G-Cter in SUMO2) cross-link involves residue K2025. S2046 carries the post-translational modification Phosphoserine. A Phosphothreonine modification is found at T2051. The segment covering 2064 to 2073 (EDEDDSDSEL) has biased composition (acidic residues). 2 positions are modified to phosphoserine: S2069 and S2071. Over residues 2076–2095 (SKLSPSSSSSSSSSSSSSST) the composition is skewed to low complexity. Over residues 2103–2116 (EEKLTDQSRSKLYD) the composition is skewed to basic and acidic residues. Phosphoserine is present on residues S2182, S2200, and S2202. Positions 2189 to 2229 (GILGPGNHLLDSPSLTPGEYGDSPVPTPRSSSAASMAEEEA) are disordered. A Phosphothreonine modification is found at T2204. S2211 carries the post-translational modification Phosphoserine. T2215 carries the phosphothreonine modification. The segment covering 2218 to 2229 (SSSAASMAEEEA) has biased composition (low complexity). S2223 is subject to Phosphoserine. K2256 participates in a covalent cross-link: Glycyl lysine isopeptide (Lys-Gly) (interchain with G-Cter in SUMO2). A disordered region spans residues 2481–2581 (PSSPHVDSST…NSDSSEDADD (101 aa)). The span at 2492-2510 (LHHHHHHPHPHHHHHHHPG) shows a compositional bias: basic residues. At S2519 the chain carries Phosphoserine. A compositionally biased stretch (polar residues) spans 2519-2528 (SPVTTASGTT). A compositionally biased stretch (acidic residues) spans 2536 to 2550 (PEEDDDEDEEDDDDL).

This sequence belongs to the SNF2/RAD54 helicase family. CHD8 subfamily. Interacts with p53/TP53, histone H1, CTNNB1, CTCF and PIAS3. Component of some MLL1/MLL complex, at least composed of the core components KMT2A/MLL1, ASH2L, HCFC1/HCF1, WDR5 and RBBP5, as well as the facultative components BACC1, CHD8, E2F6, HSP70, INO80C, KANSL1, LAS1L, MAX, MCRS1, MGA, KAT8/MOF, PELP1, PHF20, PRP31, RING2, RUVB1/TIP49A, RUVB2/TIP49B, SENP3, TAF1, TAF4, TAF6, TAF7, TAF9 and TEX10. Interacts with CHD7. Interacts with FAM124B. Interacts with TLK2. Interacts with HNRNPL in an RNA-dependent manner. In terms of processing, sumoylated.

The protein resides in the nucleus. The catalysed reaction is ATP + H2O = ADP + phosphate + H(+). In terms of biological role, ATP-dependent chromatin-remodeling factor, it slides nucleosomes along DNA; nucleosome sliding requires ATP. Acts as a transcription repressor by remodeling chromatin structure and recruiting histone H1 to target genes. Suppresses p53/TP53-mediated apoptosis by recruiting histone H1 and preventing p53/TP53 transactivation activity. Acts as a negative regulator of Wnt signaling pathway by regulating beta-catenin (CTNNB1) activity. Negatively regulates CTNNB1-targeted gene expression by being recruited specifically to the promoter regions of several CTNNB1 responsive genes. Involved in both enhancer blocking and epigenetic remodeling at chromatin boundary via its interaction with CTCF. Acts as a suppressor of STAT3 activity by suppressing the LIF-induced STAT3 transcriptional activity. Also acts as a transcription activator via its interaction with ZNF143 by participating in efficient U6 RNA polymerase III transcription. Regulates alternative splicing of a core group of genes involved in neuronal differentiation, cell cycle and DNA repair. Enables H3K36me3-coupled transcription elongation and co-transcriptional RNA processing likely via interaction with HNRNPL. The protein is Chromodomain-helicase-DNA-binding protein 8 of Homo sapiens (Human).